The primary structure comprises 460 residues: Argininosuccinate lyase (460 aa).

It belongs to the lyase 1 family. Argininosuccinate lyase subfamily.

Its subcellular location is the cytoplasm. It catalyses the reaction 2-(N(omega)-L-arginino)succinate = fumarate + L-arginine. Its pathway is amino-acid biosynthesis; L-arginine biosynthesis; L-arginine from L-ornithine and carbamoyl phosphate: step 3/3. The polypeptide is Argininosuccinate lyase (Desulforamulus reducens (strain ATCC BAA-1160 / DSM 100696 / MI-1) (Desulfotomaculum reducens)).